Consider the following 201-residue polypeptide: Putative manganese efflux pump MntP (201 aa).

5 consecutive transmembrane segments (helical) span residues C6 to I26, L39 to L59, L105 to L125, V127 to T147, and L169 to F189.

It belongs to the MntP (TC 9.B.29) family.

It is found in the cell inner membrane. Probably functions as a manganese efflux pump. The polypeptide is Putative manganese efflux pump MntP (Nitratidesulfovibrio vulgaris (strain ATCC 29579 / DSM 644 / CCUG 34227 / NCIMB 8303 / VKM B-1760 / Hildenborough) (Desulfovibrio vulgaris)).